The sequence spans 489 residues: Adenosylhomocysteinase (489 aa).

Positions 68, 151, and 213 each coordinate substrate. An NAD(+)-binding site is contributed by 214–216 (TTT). Substrate-binding residues include lysine 243 and aspartate 247. NAD(+) contacts are provided by residues asparagine 248, 277–282 (GYGDVG), glutamate 300, asparagine 335, 356–358 (IGH), and asparagine 403.

Belongs to the adenosylhomocysteinase family. Requires NAD(+) as cofactor.

The protein resides in the cytoplasm. It carries out the reaction S-adenosyl-L-homocysteine + H2O = L-homocysteine + adenosine. The protein operates within amino-acid biosynthesis; L-homocysteine biosynthesis; L-homocysteine from S-adenosyl-L-homocysteine: step 1/1. In terms of biological role, may play a key role in the regulation of the intracellular concentration of adenosylhomocysteine. In Mycobacterium sp. (strain KMS), this protein is Adenosylhomocysteinase.